Reading from the N-terminus, the 576-residue chain is Pentatricopeptide repeat-containing protein At1g79080, chloroplastic (576 aa).

A chloroplast-targeting transit peptide spans 1–37 (MSTLLNSVLSMASPESSPRKAVGFVSHIPSGFLHFSS). PPR repeat units lie at residues 105–139 (NVAH…GIIP), 140–174 (DASA…GYPS), 175–209 (NTVT…GLAP), 210–244 (NAFT…GGEP), 245–279 (NLVS…GFKA), 280–314 (NVVS…DRAP), 315–349 (SVVT…NHQF), 352–386 (TATS…RCKP), 387–417 (NEGT…LSNK), 422–456 (THDF…GFDP), 457–487 (DAHT…MEES), 493–527 (TVDN…KRMP), and 528–562 (NETT…KVIG).

It belongs to the PPR family. P subfamily.

It localises to the plastid. The protein localises to the chloroplast. The polypeptide is Pentatricopeptide repeat-containing protein At1g79080, chloroplastic (Arabidopsis thaliana (Mouse-ear cress)).